The following is a 252-amino-acid chain: Chitooligosaccharide deacetylase (252 aa).

Mg(2+) contacts are provided by His61 and His125.

This sequence belongs to the YdjC deacetylase family. ChbG subfamily. In terms of assembly, homodimer. Mg(2+) serves as cofactor.

It localises to the cytoplasm. It catalyses the reaction N,N'-diacetylchitobiose + H2O = N-acetyl-beta-D-glucosaminyl-(1-&gt;4)-D-glucosamine + acetate. It carries out the reaction diacetylchitobiose-6'-phosphate + H2O = N'-monoacetylchitobiose-6'-phosphate + acetate. The protein operates within glycan degradation; chitin degradation. Functionally, involved in the degradation of chitin. ChbG is essential for growth on the acetylated chitooligosaccharides chitobiose and chitotriose but is dispensable for growth on cellobiose and chitosan dimer, the deacetylated form of chitobiose. Deacetylation of chitobiose-6-P and chitotriose-6-P is necessary for both the activation of the chb promoter by the regulatory protein ChbR and the hydrolysis of phosphorylated beta-glucosides by the phospho-beta-glucosidase ChbF. Catalyzes the removal of only one acetyl group from chitobiose-6-P to yield monoacetylchitobiose-6-P, the inducer of ChbR and the substrate of ChbF. In Enterobacter sp. (strain 638), this protein is Chitooligosaccharide deacetylase.